A 208-amino-acid polypeptide reads, in one-letter code: Probable transcriptional regulator ycf29 (208 aa).

The Response regulatory domain maps to 11–118; it reads KLILIEPEEH…ELIAIISNLI (108 aa). D60 is modified (4-aspartylphosphate). The HTH luxR-type domain maps to 146–208; sequence TSFSYINLTV…NRIQILSYFN (63 aa).

The protein resides in the plastid. It localises to the chloroplast. The sequence is that of Probable transcriptional regulator ycf29 (ycf29) from Guillardia theta (Cryptophyte).